The following is a 264-amino-acid chain: Small ribosomal subunit protein eS1 (264 aa).

N6-acetyllysine; alternate is present on Lys-34. A Glycyl lysine isopeptide (Lys-Gly) (interchain with G-Cter in SUMO2); alternate cross-link involves residue Lys-34. N6-acetyllysine is present on Lys-56. Tyr-155 is subject to ADP-ribosyltyrosine. The segment at 232 to 264 (HGEGSSSGKATGDETGAKVERADGYEPPVQESV) is disordered. Ser-236 and Ser-237 each carry phosphoserine. Basic and acidic residues predominate over residues 242–255 (TGDETGAKVERADG). Lys-249 is subject to N6-acetyllysine; alternate. Residue Lys-249 forms a Glycyl lysine isopeptide (Lys-Gly) (interchain with G-Cter in SUMO2); alternate linkage. Tyr-256 bears the Phosphotyrosine mark. A Phosphoserine modification is found at Ser-263.

The protein belongs to the eukaryotic ribosomal protein eS1 family. As to quaternary structure, component of the small ribosomal subunit. Mature ribosomes consist of a small (40S) and a large (60S) subunit. The 40S subunit contains about 33 different proteins and 1 molecule of RNA (18S). The 60S subunit contains about 49 different proteins and 3 molecules of RNA (28S, 5.8S and 5S). Identified in a IGF2BP1-dependent mRNP granule complex containing untranslated mRNAs. Binds with high affinity to IPO4. Interacts with DDIT3. Part of the small subunit (SSU) processome, composed of more than 70 proteins and the RNA chaperone small nucleolar RNA (snoRNA) U3. ADP-ribosylated at Tyr-155 by PARP1 in presence of HPF1.

The protein resides in the cytoplasm. Its subcellular location is the nucleus. It is found in the nucleolus. Functionally, component of the small ribosomal subunit. The ribosome is a large ribonucleoprotein complex responsible for the synthesis of proteins in the cell. Part of the small subunit (SSU) processome, first precursor of the small eukaryotic ribosomal subunit. During the assembly of the SSU processome in the nucleolus, many ribosome biogenesis factors, an RNA chaperone and ribosomal proteins associate with the nascent pre-rRNA and work in concert to generate RNA folding, modifications, rearrangements and cleavage as well as targeted degradation of pre-ribosomal RNA by the RNA exosome. May play a role during erythropoiesis through regulation of transcription factor DDIT3. This Macaca fascicularis (Crab-eating macaque) protein is Small ribosomal subunit protein eS1.